The primary structure comprises 319 residues: Ribonucleoside-diphosphate reductase 2 subunit beta (319 aa).

Positions 67, 98, and 101 each coordinate Fe cation. The active site involves tyrosine 105. Residues glutamate 158, glutamate 192, and histidine 195 each contribute to the Fe cation site.

This sequence belongs to the ribonucleoside diphosphate reductase small chain family. As to quaternary structure, tetramer of two alpha and two beta subunits. Requires Fe cation as cofactor.

It carries out the reaction a 2'-deoxyribonucleoside 5'-diphosphate + [thioredoxin]-disulfide + H2O = a ribonucleoside 5'-diphosphate + [thioredoxin]-dithiol. In terms of biological role, provides the precursors necessary for DNA synthesis. Catalyzes the biosynthesis of deoxyribonucleotides from the corresponding ribonucleotides. R2F contains the tyrosyl radical required for catalysis. The chain is Ribonucleoside-diphosphate reductase 2 subunit beta (nrdF) from Escherichia coli (strain K12).